A 233-amino-acid chain; its full sequence is 7-cyano-7-deazaguanine synthase (233 aa).

L11–L21 contacts ATP. Positions 195, 203, 206, and 209 each coordinate Zn(2+).

It belongs to the QueC family. Zn(2+) serves as cofactor.

The enzyme catalyses 7-carboxy-7-deazaguanine + NH4(+) + ATP = 7-cyano-7-deazaguanine + ADP + phosphate + H2O + H(+). The protein operates within purine metabolism; 7-cyano-7-deazaguanine biosynthesis. In terms of biological role, catalyzes the ATP-dependent conversion of 7-carboxy-7-deazaguanine (CDG) to 7-cyano-7-deazaguanine (preQ(0)). The chain is 7-cyano-7-deazaguanine synthase from Thermosynechococcus vestitus (strain NIES-2133 / IAM M-273 / BP-1).